The chain runs to 1006 residues: Kinesin-like protein KIN-5C (1006 aa).

Residues 9–355 (NVQVLLRCRP…LDYAHRAKNI (347 aa)) enclose the Kinesin motor domain. An ATP-binding site is contributed by 95–102 (GQTGTGKT). Residues 371 to 522 (IKDLYGEIER…NASLFQKIAR (152 aa)) are a coiled coil.

It belongs to the TRAFAC class myosin-kinesin ATPase superfamily. Kinesin family. KIN-5/BimC subfamily.

The protein resides in the cytoplasm. It localises to the cytoskeleton. Its subcellular location is the spindle. Responsible for microtubule translocation. May be important for the organization of phragmoplast-specific arrays of microtubules. Plays an essential role in stabilizing the mitotic spindle. Required during mitotic cytokinesis. In Nicotiana tabacum (Common tobacco), this protein is Kinesin-like protein KIN-5C.